A 327-amino-acid polypeptide reads, in one-letter code: GMP reductase (327 aa).

Residue Cys-175 is the Thioimidate intermediate of the active site. NADP(+) is bound at residue 204-227 (IIADGGIRTNGDVAKSIRFGATMV).

It belongs to the IMPDH/GMPR family. GuaC type 2 subfamily.

It carries out the reaction IMP + NH4(+) + NADP(+) = GMP + NADPH + 2 H(+). Its function is as follows. Catalyzes the irreversible NADPH-dependent deamination of GMP to IMP. It functions in the conversion of nucleobase, nucleoside and nucleotide derivatives of G to A nucleotides, and in maintaining the intracellular balance of A and G nucleotides. The sequence is that of GMP reductase from Bacillus cereus (strain ZK / E33L).